The primary structure comprises 525 residues: Glucose-6-phosphate isomerase (525 aa).

Glutamate 347 acts as the Proton donor in catalysis. Residues histidine 378 and lysine 493 contribute to the active site.

Belongs to the GPI family.

The protein resides in the cytoplasm. It carries out the reaction alpha-D-glucose 6-phosphate = beta-D-fructose 6-phosphate. It functions in the pathway carbohydrate biosynthesis; gluconeogenesis. The protein operates within carbohydrate degradation; glycolysis; D-glyceraldehyde 3-phosphate and glycerone phosphate from D-glucose: step 2/4. Its function is as follows. Catalyzes the reversible isomerization of glucose-6-phosphate to fructose-6-phosphate. This Chlamydia trachomatis serovar D (strain ATCC VR-885 / DSM 19411 / UW-3/Cx) protein is Glucose-6-phosphate isomerase.